A 1433-amino-acid polypeptide reads, in one-letter code: Probable serine/threonine-protein kinase DDB_G0277989 (1433 aa).

ATP is bound by residues 1–4 (MNEI) and Lys41. The Protein kinase 1 domain occupies 1–272 (MNEIIVGEYK…EFDDFTHPLS (272 aa)). Asp151 (proton acceptor) is an active-site residue. Composition is skewed to low complexity over residues 332–362 (NNNNNNNNNNNNNNNNNNNNNNNNNNNNNNN) and 533–550 (TATTTPTPTATTPTTTTA). 2 disordered regions span residues 332-366 (NNNNNNNNNNNNNNNNNNNNNNNNNNNNNNNSDGP) and 521-550 (PSSETTPRPPTPTATTTPTPTATTPTTTTA). The Protein kinase 2 domain maps to 1177-1433 (IYDKRYYIQK…QPHVCKSFKK (257 aa)).

Belongs to the protein kinase superfamily. Ser/Thr protein kinase family.

The catalysed reaction is L-seryl-[protein] + ATP = O-phospho-L-seryl-[protein] + ADP + H(+). It carries out the reaction L-threonyl-[protein] + ATP = O-phospho-L-threonyl-[protein] + ADP + H(+). The chain is Probable serine/threonine-protein kinase DDB_G0277989 from Dictyostelium discoideum (Social amoeba).